A 73-amino-acid polypeptide reads, in one-letter code: MIEVLCNDRLGKKVRVKCMPDDTVGDFKKLVAAQTGTDPRRIVLKKWHSVFKDNITLADYEIHDGMSLEMYYS.

Positions 1 to 73 (MIEVLCNDRL…DGMSLEMYYS (73 aa)) constitute a Ubiquitin-like domain.

As to quaternary structure, interacts with snu66.

It localises to the nucleus. The protein resides in the cytoplasm. Its function is as follows. Forms a conjugate with snu66 and facilitates its localization to the nucleus. Involved in morphogenesis. Required for efficient splicing of pre-mRNA. The chain is Ubiquitin-like modifier hub1 (hub1) from Schizosaccharomyces pombe (strain 972 / ATCC 24843) (Fission yeast).